We begin with the raw amino-acid sequence, 242 residues long: Phosphoribosylaminoimidazole-succinocarboxamide synthase (242 aa).

It belongs to the SAICAR synthetase family.

The catalysed reaction is 5-amino-1-(5-phospho-D-ribosyl)imidazole-4-carboxylate + L-aspartate + ATP = (2S)-2-[5-amino-1-(5-phospho-beta-D-ribosyl)imidazole-4-carboxamido]succinate + ADP + phosphate + 2 H(+). Its pathway is purine metabolism; IMP biosynthesis via de novo pathway; 5-amino-1-(5-phospho-D-ribosyl)imidazole-4-carboxamide from 5-amino-1-(5-phospho-D-ribosyl)imidazole-4-carboxylate: step 1/2. In Prochlorococcus marinus subsp. pastoris (strain CCMP1986 / NIES-2087 / MED4), this protein is Phosphoribosylaminoimidazole-succinocarboxamide synthase.